A 1710-amino-acid chain; its full sequence is MLPTILSISYEHTYAYLSKYQTAYACEGKKLTIECEPGDVINLIRANYGRFSITICNDHGNVEWSVNCMFPKSLSVLNSRCAHKQSCGVLAATSMFGDPCPGTHKYLEAHYQCISAAQTSTTTNRPSPPPWVLSNGPPIFGNGSGLIHPPGIGAGAPPPPRLPTLPGVVGISGNPGLFNVPPQHTAVTHSTPSSSTTAMAGGRLKGVATSTTTTKHPAGRHDGLPPPPQLHHHHNHHGEDTASPTKPSSKLPAGGNATSPSNTRILTGVGGSGTDDGTLLTTKSSPNRTPGTAASGSVVPGNGSVVRTINNINLNSAGMSGGDDESKLFCGPTHARNLYWNMTRVGDVNVQPCPGGAAGIAKWRCVLMKRMPDSGYDEYDDDPSSTTPATSSADCLHNSSSCEPPVSMAHKVNQRLRNFEPTWHPTTPDLTQCRSLWLNNLEMRVNQRDSSLISIANDMSEVTSSKTLYGGDMLVTTKIIQTVSEKMLHDKETFPDQRQREAMIMELLHCVVKTGSNLLDESQLSSWLDLNPEDQMRVATSLLTGLEYNAFLLADTIIRERSVVQKVKNILLSVRVLETKTIQSSVVFPDSDQWPLSSDRIELPRAALIDNSEGGLVRIVFAAFDRLESILKPSYDHFDLKSSRSYVRNTAILSNDSDVNAGEIQQRLRILNSKVISASLGKGRHIQLSQPITLTLKHLKTENVTNPTCVFWNYIDHAWSANGCSLESTNRTHSVCSCNHLTNFAILMDVVDEHQHSLFTMFDGNMRIFIYISIGICVVFIVIALLTLKLFNGVFVKSARTSIYTSIYLCLLAIELLFLLGIEQTETSIFCGFITIFLHCAILSGTAWFCYEAFHSYSTLTSDELLLEVDQTPKVNCYYLLSYGLSLSVVAISLVIDPSTYTQNDYCVLMEANALFYATFVMPVLVFFVAAIGYTFLSWIIMCRKSRTGLKTKEHTRLASVRFDIRCSFVFLLLLSAVWCSAYFYLRGAKMDDDTADVYGYCFICFNTLLGLYIFVFHCIQNEKIRREYRKYVRQHAWLPKCLRCSKTSISSGIVTGNGPTAGTLCSVSTSKKPKLPIGVSEEAHDDPQQQQQTPVPITEDAIMGASSDCELNEAQQRRTLKSGLMTGTLQAPPQTLGGHVVLERGSTLRSTGHASPTSSAGSTHLIFAHKQQQQQQQQGPLGESYYHQPDYYSWKQPPTGTGGLKTPREYYNNTGAAASSPQQAHEVFYWTQKPNSGQHGKKKRGAGGVPASPSGSLHSRTAAASQVLFYPSYKKTKAGQPTGYPQYAEALDPPLATGNAAAYYQQQQQLRRQQLHLQQQQQQQQQLSSDEEQVEQHAHLLQLQRRAGSQQQLPAPPPHMAQYQQEFMQRQYRNKQSNCDLGMGDAYYNQGSVGGADGGPVYEEILSNRNSDVQHYEVGDFDVDEVYNNSVGTGVFNNMRAAVAAGGSRYGGGSLSGGSVSSRSQQQQLKKQQQQQSLAQQRSARRCTADDDDDEDEEEDEEATAAEQLHDSVCDEDEEEDESDLEDDAHGLPPQSDERMRRLMAMQDEDFKRRFQRQLRKHGAPLDYGALPPGAGPQPEHNGAVFGVSGGVGEGSKRGAFRQQQQALNAKSPGGRLAVNDLFGHGNSGPPLPPANQTPAQKRQQLQKLSPQSTTSSSSHTSHSNPNPHPHQLTHPHPHQHPPHHQQRHLSAMLDENNTVRCYLEPLAK.

Residues 1–767 (MLPTILSISY…LFTMFDGNMR (767 aa)) lie on the Extracellular side of the membrane. The SUEL-type lectin domain occupies 25–114 (ACEGKKLTIE…KYLEAHYQCI (90 aa)). Residue Asn-142 is glycosylated (N-linked (GlcNAc...) asparagine). The tract at residues 183–304 (QHTAVTHSTP…SGSVVPGNGS (122 aa)) is disordered. Composition is skewed to polar residues over residues 185 to 198 (TAVTHSTPSSSTTA) and 256 to 265 (NATSPSNTRI). The N-linked (GlcNAc...) asparagine glycan is linked to Asn-256. Low complexity-rich tracts occupy residues 275 to 285 (DDGTLLTTKSS) and 295 to 304 (SGSVVPGNGS). Asn-302 and Asn-341 each carry an N-linked (GlcNAc...) asparagine glycan. The tract at residues 376–400 (YDEYDDDPSSTTPATSSADCLHNSS) is disordered. Residues 384 to 394 (SSTTPATSSAD) are compositionally biased toward low complexity. 4 N-linked (GlcNAc...) asparagine glycosylation sites follow: Asn-398, Asn-655, Asn-703, and Asn-730. The region spanning 561-754 (RSVVQKVKNI…AILMDVVDEH (194 aa)) is the GAIN-B domain. Disulfide bonds link Cys-709–Cys-736 and Cys-724–Cys-738. A GPS region spans residues 709–754 (CVFWNYIDHAWSANGCSLESTNRTHSVCSCNHLTNFAILMDVVDEH). Residues 768–788 (IFIYISIGICVVFIVIALLTL) traverse the membrane as a helical segment. The Cytoplasmic segment spans residues 789–801 (KLFNGVFVKSART). A helical transmembrane segment spans residues 802–822 (SIYTSIYLCLLAIELLFLLGI). Over 823–828 (EQTETS) the chain is Extracellular. A helical transmembrane segment spans residues 829–849 (IFCGFITIFLHCAILSGTAWF). The Cytoplasmic segment spans residues 850–875 (CYEAFHSYSTLTSDELLLEVDQTPKV). A helical transmembrane segment spans residues 876-896 (NCYYLLSYGLSLSVVAISLVI). At 897–920 (DPSTYTQNDYCVLMEANALFYATF) the chain is on the extracellular side. The chain crosses the membrane as a helical span at residues 921-941 (VMPVLVFFVAAIGYTFLSWII). Residues 942–968 (MCRKSRTGLKTKEHTRLASVRFDIRCS) are Cytoplasmic-facing. A helical membrane pass occupies residues 969–989 (FVFLLLLSAVWCSAYFYLRGA). At 990 to 999 (KMDDDTADVY) the chain is on the extracellular side. Residues 1000–1020 (GYCFICFNTLLGLYIFVFHCI) traverse the membrane as a helical segment. Topologically, residues 1021 to 1710 (QNEKIRREYR…VRCYLEPLAK (690 aa)) are cytoplasmic. Phosphoserine occurs at positions 1156, 1253, 1260, 1329, and 1330. The interval 1234–1259 (KPNSGQHGKKKRGAGGVPASPSGSLH) is disordered. Disordered stretches follow at residues 1452 to 1540 (GGGS…SDER) and 1568 to 1690 (DYGA…QQRH). Positions 1458 to 1483 (GGSVSSRSQQQQLKKQQQQQSLAQQR) are enriched in low complexity. 2 stretches are compositionally biased toward acidic residues: residues 1491 to 1505 (DDDDDEDEEEDEEAT) and 1515 to 1528 (CDEDEEEDESDLED). Polar residues predominate over residues 1638-1650 (QTPAQKRQQLQKL). A compositionally biased stretch (low complexity) spans 1651-1672 (SPQSTTSSSSHTSHSNPNPHPH). The span at 1673–1689 (QLTHPHPHQHPPHHQQR) shows a compositional bias: basic residues.

This sequence belongs to the G-protein coupled receptor 2 family. LN-TM7 subfamily. As to quaternary structure, forms a heterodimer, consisting of a large extracellular region non-covalently linked to a seven-transmembrane moiety. In terms of processing, proteolytically cleaved into 2 subunits, an extracellular subunit and a seven-transmembrane subunit.

It is found in the cell membrane. In Drosophila erecta (Fruit fly), this protein is Latrophilin Cirl.